We begin with the raw amino-acid sequence, 97 residues long: Large ribosomal subunit protein eL21 (97 aa).

The protein belongs to the eukaryotic ribosomal protein eL21 family.

This chain is Large ribosomal subunit protein eL21, found in Methanococcus aeolicus (strain ATCC BAA-1280 / DSM 17508 / OCM 812 / Nankai-3).